We begin with the raw amino-acid sequence, 176 residues long: MSKNNDTTLLNEEIRFPEVRCLGDEGTQYGVVSSSEALKIAQDLGLDLVLIAPEAKPPVCKIMDYGKFRYQQEKKQKEAKKKQKQIEIKEIKLSVKIAQNDVNYKVKHAKEFLEEDKHVRFRVFLKGREMSEPQSGVEVLKRVWELVEDIAIMDKEPKPEGRYVNMTVIPKPKKVK.

This sequence belongs to the IF-3 family. Monomer.

It is found in the cytoplasm. Functionally, IF-3 binds to the 30S ribosomal subunit and shifts the equilibrium between 70S ribosomes and their 50S and 30S subunits in favor of the free subunits, thus enhancing the availability of 30S subunits on which protein synthesis initiation begins. The protein is Translation initiation factor IF-3 of Wolinella succinogenes (strain ATCC 29543 / DSM 1740 / CCUG 13145 / JCM 31913 / LMG 7466 / NCTC 11488 / FDC 602W) (Vibrio succinogenes).